The following is a 95-amino-acid chain: Feather keratin B-4 (95 aa).

An N-acetylserine modification is found at serine 1.

This sequence belongs to the avian keratin family. The avian keratins (F-ker, S-ker, C-ker and B-ker) are a complex mixture of very similar polypeptides.

This Columba livia (Rock dove) protein is Feather keratin B-4.